Reading from the N-terminus, the 706-residue chain is Lysophospholipase 2 (706 aa).

A signal peptide spans 1-19 (MQLRNILQASSLISGLSLA). A PLA2c domain is found at 36–588 (PCPSDDTSLV…ADYCWNGTLS (553 aa)). Residues N47, N80, N94, N125, N162, N181, N193, N217, N279, N309, N365, N390, N491, N515, N524, N543, N567, N584, N598, N630, N634, N642, N648, N652, and N658 are each glycosylated (N-linked (GlcNAc...) asparagine). A disordered region spans residues 627–672 (TSGNTTSNSTTSTSSNVTSNSNSSSNTTLNSNSSSSSISSSTARSS). Residue N680 is the site of GPI-anchor amidated asparagine attachment. A propeptide spans 681 to 706 (AAAISYANTNTLMSLLGAITALFGLI) (removed in mature form).

Belongs to the lysophospholipase family. The GPI-anchor is attached to the protein in the endoplasmic reticulum and serves to target the protein to the cell surface. There, the glucosamine-inositol phospholipid moiety is cleaved off and the GPI-modified mannoprotein is covalently attached via its lipidless GPI glycan remnant to the 1,6-beta-glucan of the outer cell wall layer.

The protein localises to the secreted. The protein resides in the cell wall. Its subcellular location is the membrane. The enzyme catalyses a 1-acyl-sn-glycero-3-phosphocholine + H2O = sn-glycerol 3-phosphocholine + a fatty acid + H(+). The catalysed reaction is 1-hexadecanoyl-sn-glycero-3-phosphoethanolamine + H2O = sn-glycero-3-phosphoethanolamine + hexadecanoate + H(+). It catalyses the reaction 1-hexadecanoyl-sn-glycero-3-phosphocholine + H2O = sn-glycerol 3-phosphocholine + hexadecanoate + H(+). It carries out the reaction 1-hexadecanoyl-sn-glycero-3-phospho-L-serine + H2O = sn-glycero-3-phospho-L-serine + hexadecanoate + H(+). The enzyme catalyses 1,2-dihexadecanoyl-sn-glycero-3-phosphocholine + H2O = 1-hexadecanoyl-sn-glycero-3-phosphocholine + hexadecanoate + H(+). In terms of biological role, sequentially removes both fatty acyl groups from diacylglycerophospholipids and therefore has both phospholipase A and lysophospholipase activities. However, it does not display transacylase activity. Substrate preference is phosphatidylserine &gt; phosphatidylinositol &gt; phosphatidylcholine &gt; phosphatidylethanolamine. The substrate specificity is pH- and ion-dependent. In contrast with activities observed at optimum pH 3.5, the order of substrate preference at pH 5.5 is phosphatidylserine = phosphatidylethanolamine &gt; phosphatidylcholine &gt; phosphatidylinositol. The sequence is that of Lysophospholipase 2 (PLB2) from Saccharomyces cerevisiae (strain ATCC 204508 / S288c) (Baker's yeast).